A 1006-amino-acid polypeptide reads, in one-letter code: uncharacterized protein (1006 aa).

The interval 326-371 is disordered; it reads EMEKKRPRSPELVPKKIVMEKERPSSPDSEAEEREHNLRIEKERHQ. Composition is skewed to basic and acidic residues over residues 338–350 and 358–371; these read VPKK…ERPS and EREH…ERHQ. 2 coiled-coil regions span residues 358–473 and 756–782; these read EREH…ARLA and EVQK…AFGR.

This is an uncharacterized protein from Caenorhabditis elegans.